The following is a 498-amino-acid chain: 3-octaprenyl-4-hydroxybenzoate carboxy-lyase (498 aa).

Residue asparagine 177 coordinates Mn(2+). Residues 180 to 182, 194 to 196, and 199 to 200 contribute to the prenylated FMN site; these read IYR, RWL, and RG. Residue glutamate 243 coordinates Mn(2+). Residue aspartate 292 is the Proton donor of the active site.

Belongs to the UbiD family. In terms of assembly, homohexamer. Prenylated FMN serves as cofactor. Mn(2+) is required as a cofactor.

Its subcellular location is the cell membrane. The catalysed reaction is a 4-hydroxy-3-(all-trans-polyprenyl)benzoate + H(+) = a 2-(all-trans-polyprenyl)phenol + CO2. The protein operates within cofactor biosynthesis; ubiquinone biosynthesis. Catalyzes the decarboxylation of 3-octaprenyl-4-hydroxy benzoate to 2-octaprenylphenol, an intermediate step in ubiquinone biosynthesis. This Methylococcus capsulatus (strain ATCC 33009 / NCIMB 11132 / Bath) protein is 3-octaprenyl-4-hydroxybenzoate carboxy-lyase.